The following is a 320-amino-acid chain: Protein LATERAL ROOT PRIMORDIUM 1 (320 aa).

The segment at 90–110 is disordered; the sequence is QTTVGTSSNNSGSGSGASGTA. 6 residues coordinate Zn(2+): Cys-112, Cys-115, Cys-123, Cys-128, Cys-132, and Cys-139. A DNA-binding region (zn(2)-C6 fungal-type; degenerate) is located at residues 112–139; sequence CQDCGNQAKKECKQRRCRTCCKSRGFDC. The interval 150-223 is disordered; it reads AARRRERQVM…QDGGGSREAW (74 aa). Low complexity predominate over residues 168–177; that stretch reads GSSLSTSSGT. Residues 193-214 show a composition bias toward polar residues; that stretch reads ATSHTSTSNTPPQSFETSSSRQ. The short motif at 256–259 is the Required for homo- and heterodimerization element; that stretch reads IGGH.

Belongs to the SHI protein family. Homodimer. As to expression, restricted to lateral root primordia.

The protein resides in the nucleus. Transcription activator that binds DNA on 5'-ACTCTAC-3' and promotes auxin homeostasis-regulating gene expression (e.g. YUC genes), as well as genes affecting stamen development, cell expansion and timing of flowering. Synergistically with other SHI-related proteins, regulates gynoecium, stamen and leaf development in a dose-dependent manner, controlling apical-basal patterning. Promotes style and stigma formation, and influence vascular development during gynoecium development. May also have a role in the formation and/or maintenance of the shoot apical meristem (SAM). Modulates root growth. The polypeptide is Protein LATERAL ROOT PRIMORDIUM 1 (LRP1) (Arabidopsis thaliana (Mouse-ear cress)).